The following is a 731-amino-acid chain: 1,4-alpha-glucan branching enzyme GlgB (731 aa).

Residue Asp408 is the Nucleophile of the active site. Catalysis depends on Glu461, which acts as the Proton donor.

This sequence belongs to the glycosyl hydrolase 13 family. GlgB subfamily. As to quaternary structure, monomer.

It carries out the reaction Transfers a segment of a (1-&gt;4)-alpha-D-glucan chain to a primary hydroxy group in a similar glucan chain.. It participates in glycan biosynthesis; glycogen biosynthesis. Its function is as follows. Catalyzes the formation of the alpha-1,6-glucosidic linkages in glycogen by scission of a 1,4-alpha-linked oligosaccharide from growing alpha-1,4-glucan chains and the subsequent attachment of the oligosaccharide to the alpha-1,6 position. The polypeptide is 1,4-alpha-glucan branching enzyme GlgB (Corynebacterium glutamicum (strain ATCC 13032 / DSM 20300 / JCM 1318 / BCRC 11384 / CCUG 27702 / LMG 3730 / NBRC 12168 / NCIMB 10025 / NRRL B-2784 / 534)).